We begin with the raw amino-acid sequence, 635 residues long: Cell pattern formation-associated protein stuA (635 aa).

Disordered regions lie at residues 1-21 (MNQT…AQPY) and 63-82 (SGVA…MSSQ). Residues 129-235 (RVTATLWEDE…HNIGGLLYHP (107 aa)) form the HTH APSES-type domain. The H-T-H motif DNA-binding region spans 163 to 184 (GTKLLNVAGMTRGRRDGILKSE). Disordered regions lie at residues 246–480 (QESQ…ASRS) and 498–635 (SQLT…PRRR). 2 stretches are compositionally biased toward low complexity: residues 276-294 (MQTS…SSQP) and 312-325 (SASS…QSSS). Residues 326-355 (YDWNNQGMNSGVPNTQPLSIDTTLSNTRSM) are compositionally biased toward polar residues. Low complexity predominate over residues 356-380 (PTTPATTPPGNNLQGMQSYQSQSGY). Residues 460–469 (APEHESEYVQ) show a composition bias toward basic and acidic residues. Composition is skewed to polar residues over residues 498 to 513 (SQLT…QNGS) and 539 to 571 (AASS…TAPT). Positions 582 to 605 (KRGREDDDMGRPDSQGDYESKRRR) are nuclear localization domain. Basic and acidic residues predominate over residues 583 to 592 (RGREDDDMGR).

It belongs to the EFG1/PHD1/stuA family.

Its function is as follows. Transcription factor that regulates asexual reproduction. Binds the StuA-response elements (StRE) with the consensus sequence 5'-(A/T)CGCG(T/A)N(A/C)-3' at the promoters of target genes. Controls the expression of 6 secondary metabolite biosynthetic clusters including 2 involved in the synthesis of alkaloids (fumigaclavine and fumitremorgen), 2 clusters of the ETP class (gliotoxin and an unknown ETP-like toxin), a cluster predicted to produce pseurotin A, and the product of the last cluster is unknown. Controls the production of ergot alkaloids during conidiophore development. Controls expression of sspA and gliP. Involved in the induction of immunoglobulin E-independent mast cell degranulation. This chain is Cell pattern formation-associated protein stuA, found in Aspergillus fumigatus (strain ATCC MYA-4609 / CBS 101355 / FGSC A1100 / Af293) (Neosartorya fumigata).